The primary structure comprises 322 residues: Mas-related G-protein coupled receptor member X1 (322 aa).

Over Met1–Thr31 the chain is Extracellular. A glycan (N-linked (GlcNAc...) asparagine) is linked at Asn16. The helical transmembrane segment at Val32 to Leu52 threads the bilayer. Over Gly53–Asn67 the chain is Cytoplasmic. Residues Leu68–Ile88 traverse the membrane as a helical segment. The Extracellular portion of the chain corresponds to Ser89 to Lys96. The chain crosses the membrane as a helical span at residues Ile97–Ser117. Residues Thr118–Val144 are Cytoplasmic-facing. Residues Leu145 to Phe165 traverse the membrane as a helical segment. Residues Ser166 to Asp177 lie on the Extracellular side of the membrane. A helical transmembrane segment spans residues Phe178–Leu198. Over Leu199–Thr221 the chain is Cytoplasmic. Residues Val222 to Ile242 traverse the membrane as a helical segment. Topologically, residues His243–His254 are extracellular. A helical membrane pass occupies residues Leu255–Val275. Over Gly276–Gln322 the chain is Cytoplasmic.

Belongs to the G-protein coupled receptor 1 family. Mas subfamily. As to expression, uniquely localized in a subset of small dorsal root and trigeminal sensory neurons.

It localises to the cell membrane. In terms of biological role, orphan receptor. Probably involved in the function of nociceptive neurons. May regulate nociceptor function and/or development, including the sensation or modulation of pain. Potently activated by enkephalins including BAM22 (bovine adrenal medulla peptide 22) and BAM (8-22). BAM22 is the most potent compound and evoked a large and dose-dependent release of intracellular calcium in stably transfected cells. G(alpha)q proteins are involved in the calcium-signaling pathway. Activated by the antimalarial drug, chloroquine. May mediate chloroquine-induced itch, in a histamine-independent manner. The sequence is that of Mas-related G-protein coupled receptor member X1 (MRGPRX1) from Homo sapiens (Human).